Here is a 311-residue protein sequence, read N- to C-terminus: Aspartate carbamoyltransferase catalytic subunit (311 aa).

2 residues coordinate carbamoyl phosphate: R59 and T60. L-aspartate is bound at residue K87. Positions 109, 139, and 142 each coordinate carbamoyl phosphate. Positions 172 and 224 each coordinate L-aspartate. Residues A265 and P266 each contribute to the carbamoyl phosphate site.

It belongs to the aspartate/ornithine carbamoyltransferase superfamily. ATCase family. As to quaternary structure, heterododecamer (2C3:3R2) of six catalytic PyrB chains organized as two trimers (C3), and six regulatory PyrI chains organized as three dimers (R2).

The enzyme catalyses carbamoyl phosphate + L-aspartate = N-carbamoyl-L-aspartate + phosphate + H(+). It participates in pyrimidine metabolism; UMP biosynthesis via de novo pathway; (S)-dihydroorotate from bicarbonate: step 2/3. In terms of biological role, catalyzes the condensation of carbamoyl phosphate and aspartate to form carbamoyl aspartate and inorganic phosphate, the committed step in the de novo pyrimidine nucleotide biosynthesis pathway. In Streptococcus pyogenes serotype M18 (strain MGAS8232), this protein is Aspartate carbamoyltransferase catalytic subunit.